The chain runs to 182 residues: Type-1 fimbrial protein, A chain (182 aa).

A signal peptide spans 1 to 23 (MKIKTLAIVVLSALSLSSTAALA). Cys44 and Cys84 are oxidised to a cystine.

It belongs to the fimbrial protein family.

The protein localises to the fimbrium. Functionally, fimbriae (also called pili), polar filaments radiating from the surface of the bacterium to a length of 0.5-1.5 micrometers and numbering 100-300 per cell, enable bacteria to colonize the epithelium of specific host organs. This Escherichia coli (strain K12) protein is Type-1 fimbrial protein, A chain (fimA).